A 326-amino-acid polypeptide reads, in one-letter code: Vitamin B12 import system permease protein BtuC (326 aa).

9 helical membrane-spanning segments follow: residues 19–39 (LSVL…LWIL), 61–81 (LAVL…QALF), 88–108 (PGLL…VLLG), 112–132 (LPNW…TLIL), 146–166 (LLAG…AIYF), 184–204 (GGVD…LLWI), 240–260 (GWMV…GLVI), 274–294 (VLLP…DIVA), and 302–322 (ELPI…WLLL).

This sequence belongs to the binding-protein-dependent transport system permease family. FecCD subfamily. As to quaternary structure, the complex is composed of two ATP-binding proteins (BtuD), two transmembrane proteins (BtuC) and a solute-binding protein (BtuF).

The protein resides in the cell inner membrane. In terms of biological role, part of the ABC transporter complex BtuCDF involved in vitamin B12 import. Involved in the translocation of the substrate across the membrane. This chain is Vitamin B12 import system permease protein BtuC, found in Escherichia coli O127:H6 (strain E2348/69 / EPEC).